The sequence spans 114 residues: T cell receptor beta variable 5-8 (114 aa).

The N-terminal stretch at 1-21 (MGPRLLFWALLCLLGTGPVEA) is a signal peptide. Residues 22–114 (GVTQSPTHLI…SALYLCASSL (93 aa)) enclose the Ig-like domain. The cysteines at positions 42 and 110 are disulfide-linked. Asn90 carries N-linked (GlcNAc...) asparagine glycosylation.

Alpha-beta TR is a heterodimer composed of an alpha and beta chain; disulfide-linked. The alpha-beta TR is associated with the transmembrane signaling CD3 coreceptor proteins to form the TR-CD3 (TcR or TCR). The assembly of alpha-beta TR heterodimers with CD3 occurs in the endoplasmic reticulum where a single alpha-beta TR heterodimer associates with one CD3D-CD3E heterodimer, one CD3G-CD3E heterodimer and one CD247 homodimer forming a stable octameric structure. CD3D-CD3E and CD3G-CD3E heterodimers preferentially associate with TR alpha and TR beta chains, respectively. The association of the CD247 homodimer is the last step of TcR assembly in the endoplasmic reticulum and is required for transport to the cell surface.

It localises to the cell membrane. V region of the variable domain of T cell receptor (TR) beta chain that participates in the antigen recognition. Alpha-beta T cell receptors are antigen specific receptors which are essential to the immune response and are present on the cell surface of T lymphocytes. Recognize peptide-major histocompatibility (MH) (pMH) complexes that are displayed by antigen presenting cells (APC), a prerequisite for efficient T cell adaptive immunity against pathogens. Binding of alpha-beta TR to pMH complex initiates TR-CD3 clustering on the cell surface and intracellular activation of LCK that phosphorylates the ITAM motifs of CD3G, CD3D, CD3E and CD247 enabling the recruitment of ZAP70. In turn ZAP70 phosphorylates LAT, which recruits numerous signaling molecules to form the LAT signalosome. The LAT signalosome propagates signal branching to three major signaling pathways, the calcium, the mitogen-activated protein kinase (MAPK) kinase and the nuclear factor NF-kappa-B (NF-kB) pathways, leading to the mobilization of transcription factors that are critical for gene expression and essential for T cell growth and differentiation. The T cell repertoire is generated in the thymus, by V-(D)-J rearrangement. This repertoire is then shaped by intrathymic selection events to generate a peripheral T cell pool of self-MH restricted, non-autoaggressive T cells. Post-thymic interaction of alpha-beta TR with the pMH complexes shapes TR structural and functional avidity. The sequence is that of T cell receptor beta variable 5-8 from Homo sapiens (Human).